Here is a 749-residue protein sequence, read N- to C-terminus: Cytosolic phospholipase A2 (749 aa).

The segment at 1-178 is phospholipid binding; it reads MSFIDPYQHI…MKKLLGPKKS (178 aa). A Phosphoserine modification is found at Ser2. The C2 domain maps to 6–122; sequence PYQHIIVEHQ…KVGEKKEVPF (117 aa). Asp40, Thr41, Asp43, Asn65, Asp93, Ala94, and Asn95 together coordinate Ca(2+). Positions 140–740 constitute a PLA2c domain; the sequence is SCPDLRFSMA…SNVEARRFFN (601 aa). Ser228 functions as the Nucleophile in the catalytic mechanism. Thr268 carries the post-translational modification Phosphothreonine. The segment at 427 to 456 is disordered; that stretch reads KHIVSNDSSDSDDESQEPKGTENEDAERDY. Phosphoserine is present on residues Ser434, Ser435, and Ser437. A Phosphoserine; by MAPK modification is found at Ser505. Ser515 is modified (phosphoserine). Lys541 participates in a covalent cross-link: Glycyl lysine isopeptide (Lys-Gly) (interchain with G-Cter in SUMO2). Residue Asp549 is the Proton acceptor of the active site. Residue Lys606 forms a Glycyl lysine isopeptide (Lys-Gly) (interchain with G-Cter in SUMO2) linkage. Phosphoserine is present on residues Ser727 and Ser729.

As to quaternary structure, interacts with KAT5. Post-translationally, phosphorylated at both Ser-505 and Ser-727 in response to mitogenic stimuli.

It is found in the cytoplasm. The protein localises to the golgi apparatus membrane. Its subcellular location is the nucleus envelope. It catalyses the reaction a 1,2-diacyl-sn-glycero-3-phosphocholine + H2O = a 1-acyl-sn-glycero-3-phosphocholine + a fatty acid + H(+). It carries out the reaction a 1-O-alkyl-2-acyl-sn-glycero-3-phosphocholine + H2O = a 1-O-alkyl-sn-glycero-3-phosphocholine + a fatty acid + H(+). The catalysed reaction is a 1-acyl-sn-glycero-3-phosphocholine + H2O = sn-glycerol 3-phosphocholine + a fatty acid + H(+). The enzyme catalyses 1-hexadecanoyl-2-(5Z,8Z,11Z,14Z-eicosatetraenoyl)-sn-glycero-3-phosphocholine + H2O = 1-hexadecanoyl-sn-glycero-3-phosphocholine + (5Z,8Z,11Z,14Z)-eicosatetraenoate + H(+). It catalyses the reaction 1,2-di-(5Z,8Z,11Z,14Z-eicosatetraenoyl)-sn-glycero-3-phosphocholine + H2O = 1-(5Z,8Z,11Z,14Z-eicosatetraenoyl)-sn-glycero-3-phosphocholine + (5Z,8Z,11Z,14Z)-eicosatetraenoate + H(+). It carries out the reaction 1-octadecanoyl-2-(5Z,8Z,11Z,14Z-eicosatetraenoyl)-sn-glycero-3-phosphocholine + H2O = 1-octadecanoyl-sn-glycero-3-phosphocholine + (5Z,8Z,11Z,14Z)-eicosatetraenoate + H(+). The catalysed reaction is 1-hexadecanoyl-2-(9Z,12Z-octadecadienoyl)-sn-glycero-3-phosphocholine + H2O = (9Z,12Z)-octadecadienoate + 1-hexadecanoyl-sn-glycero-3-phosphocholine + H(+). The enzyme catalyses 1-octadecanoyl-2-(9Z,12Z,15Z-octadecatrienoyl)-sn-glycero-3-phosphocholine + H2O = (9Z,12Z,15Z)-octadecatrienoate + 1-octadecanoyl-sn-glycero-3-phosphocholine + H(+). It catalyses the reaction 1-(5Z,8Z,11Z,14Z-eicosatetraenoyl)-2-hexadecanoyl-sn-glycero-3-phosphocholine + H2O = 1-(5Z,8Z,11Z,14Z-eicosatetraenoyl)-sn-glycero-3-phosphocholine + hexadecanoate + H(+). It carries out the reaction 1-O-hexadecyl-2-(5Z,8Z,11Z,14Z)-eicosatetraenoyl-sn-glycero-3-phosphocholine + H2O = 1-O-hexadecyl-sn-glycero-3-phosphocholine + (5Z,8Z,11Z,14Z)-eicosatetraenoate + H(+). The catalysed reaction is 1,2-di-(9Z-octadecenoyl)-sn-glycero-3-phospho-(1'-sn-glycerol) + H2O = 1-(9Z-octadecenoyl)-sn-glycero-3-phospho-(1'-sn-glycerol) + (9Z)-octadecenoate + H(+). The enzyme catalyses 1-octadecanoyl-2-(5Z,8Z,11Z,14Z-eicosatetraenoyl)-sn-glycero-3-phosphate + H2O = 1-octadecanoyl-sn-glycero-3-phosphate + (5Z,8Z,11Z,14Z)-eicosatetraenoate + H(+). It catalyses the reaction 1-hexadecanoyl-sn-glycero-3-phosphocholine + H2O = sn-glycerol 3-phosphocholine + hexadecanoate + H(+). It carries out the reaction 2-(prostaglandin E2)-sn-glycero-3-phosphoethanolamine + H2O = sn-glycero-3-phosphoethanolamine + prostaglandin E2 + H(+). The catalysed reaction is 2-[(15S)-hydroxy-(5Z,8Z,11Z,13E)-eicosatetraenoyl]-sn-glycero-3-phosphocholine + H2O = (15S)-hydroxy-(5Z,8Z,11Z,13E)-eicosatetraenoate + sn-glycerol 3-phosphocholine + H(+). The enzyme catalyses 2-[(15R)-hydroxy-(5Z,8Z,11Z,13E)-eicosatetraenoyl]-sn-glycero-3-phosphocholine + H2O = (15R)-hydroxy-(5Z,8Z,11Z,13E)-eicosatetraenoate + sn-glycerol 3-phosphocholine + H(+). It catalyses the reaction 2-(prostaglandin E2)-sn-glycero-3-phosphocholine + H2O = prostaglandin E2 + sn-glycerol 3-phosphocholine + H(+). It carries out the reaction 2-[(11R)-hydroxy-(5Z,8Z,12E,14Z)-eicosatetraenoyl]-sn-glycero-3-phosphocholine + H2O = (11R)-hydroxy-(5Z,8Z,12E,14Z)-eicosatetraenoate + sn-glycerol 3-phosphocholine + H(+). The catalysed reaction is 1-(5Z,8Z,11Z,14Z-eicosatetraenoyl)-2-O-hexadecyl-sn-glycero-3-phosphocholine + H2O = 2-O-hexadecyl-sn-glycero-3-phosphocholine + (5Z,8Z,11Z,14Z)-eicosatetraenoate + H(+). The enzyme catalyses 1-octadecanoyl-2-(5Z,8Z,11Z,14Z-eicosatetraenoyl)-sn-glycero-3-phosphocholine + glycerol = 1-(5Z,8Z,11Z,14Z-eicosatetraenoyl)-glycerol + 1-octadecanoyl-sn-glycero-3-phosphocholine. It catalyses the reaction 1-octadecanoyl-2-(9Z,12Z,15Z-octadecatrienoyl)-sn-glycero-3-phosphocholine + glycerol = 1-(9Z,12Z,15Z-octadecatrienoyl)-glycerol + 1-octadecanoyl-sn-glycero-3-phosphocholine. It participates in membrane lipid metabolism; glycerophospholipid metabolism. It functions in the pathway lipid metabolism; arachidonate metabolism. The protein operates within lipid metabolism; prostaglandin biosynthesis. Its pathway is lipid metabolism; leukotriene B4 biosynthesis. With respect to regulation, activated by cytosolic calcium, which is necessary for binding to membrane lipids. Activated by phosphorylation in response to mitogenic stimuli. Has primarily calcium-dependent phospholipase and lysophospholipase activities, with a major role in membrane lipid remodeling and biosynthesis of lipid mediators of the inflammatory response. Plays an important role in embryo implantation and parturition through its ability to trigger prostanoid production. Preferentially hydrolyzes the ester bond of the fatty acyl group attached at sn-2 position of phospholipids (phospholipase A2 activity). Selectively hydrolyzes sn-2 arachidonoyl group from membrane phospholipids, providing the precursor for eicosanoid biosynthesis via the cyclooxygenase pathway. In an alternative pathway of eicosanoid biosynthesis, hydrolyzes sn-2 fatty acyl chain of eicosanoid lysophopholipids to release free bioactive eicosanoids. Hydrolyzes the ester bond of the fatty acyl group attached at sn-1 position of phospholipids (phospholipase A1 activity) only if an ether linkage rather than an ester linkage is present at the sn-2 position. This hydrolysis is not stereospecific. Has calcium-independent phospholipase A2 and lysophospholipase activities in the presence of phosphoinositides. Has O-acyltransferase activity. Catalyzes the transfer of fatty acyl chains from phospholipids to a primary hydroxyl group of glycerol (sn-1 or sn-3), potentially contributing to monoacylglycerol synthesis. In Equus caballus (Horse), this protein is Cytosolic phospholipase A2 (PLA2G4A).